Here is a 359-residue protein sequence, read N- to C-terminus: DNA polymerase IV (359 aa).

The region spanning isoleucine 4–glycine 185 is the UmuC domain. Aspartate 8 and aspartate 103 together coordinate Mg(2+). The active site involves glutamate 104.

Belongs to the DNA polymerase type-Y family. As to quaternary structure, monomer. It depends on Mg(2+) as a cofactor.

Its subcellular location is the cytoplasm. It catalyses the reaction DNA(n) + a 2'-deoxyribonucleoside 5'-triphosphate = DNA(n+1) + diphosphate. Functionally, poorly processive, error-prone DNA polymerase involved in untargeted mutagenesis. Copies undamaged DNA at stalled replication forks, which arise in vivo from mismatched or misaligned primer ends. These misaligned primers can be extended by PolIV. Exhibits no 3'-5' exonuclease (proofreading) activity. May be involved in translesional synthesis, in conjunction with the beta clamp from PolIII. In Shewanella loihica (strain ATCC BAA-1088 / PV-4), this protein is DNA polymerase IV.